Reading from the N-terminus, the 500-residue chain is Aspartyl/glutamyl-tRNA(Asn/Gln) amidotransferase subunit B (500 aa).

The protein belongs to the GatB/GatE family. GatB subfamily. Heterotrimer of A, B and C subunits.

The catalysed reaction is L-glutamyl-tRNA(Gln) + L-glutamine + ATP + H2O = L-glutaminyl-tRNA(Gln) + L-glutamate + ADP + phosphate + H(+). The enzyme catalyses L-aspartyl-tRNA(Asn) + L-glutamine + ATP + H2O = L-asparaginyl-tRNA(Asn) + L-glutamate + ADP + phosphate + 2 H(+). Its function is as follows. Allows the formation of correctly charged Asn-tRNA(Asn) or Gln-tRNA(Gln) through the transamidation of misacylated Asp-tRNA(Asn) or Glu-tRNA(Gln) in organisms which lack either or both of asparaginyl-tRNA or glutaminyl-tRNA synthetases. The reaction takes place in the presence of glutamine and ATP through an activated phospho-Asp-tRNA(Asn) or phospho-Glu-tRNA(Gln). The protein is Aspartyl/glutamyl-tRNA(Asn/Gln) amidotransferase subunit B of Brucella melitensis biotype 2 (strain ATCC 23457).